The sequence spans 495 residues: Cobyric acid synthase (495 aa).

A GATase cobBQ-type domain is found at 252 to 439 (RIRIAAPMLS…VHGLFAQDAF (188 aa)). The active-site Nucleophile is Cys-334. The active site involves His-431.

It belongs to the CobB/CobQ family. CobQ subfamily.

Its pathway is cofactor biosynthesis; adenosylcobalamin biosynthesis. Catalyzes amidations at positions B, D, E, and G on adenosylcobyrinic A,C-diamide. NH(2) groups are provided by glutamine, and one molecule of ATP is hydrogenolyzed for each amidation. The protein is Cobyric acid synthase of Hyphomonas neptunium (strain ATCC 15444).